Consider the following 443-residue polypeptide: MTQTWNLLQAGQERNYKVAYINARIIDPETKLDIEGSLLTEGSKIIDFGESLFSNGVPSGVDETINCEGLVLMPGLVDIHVHFREPGQEHKETIYTGSKSAAAGGVTTVVCQPNTTPAIDSVILAKYLKYRALETSHVNIEFYAKITTSEEKLTEVALLKEAGAVGFTDDGIPVMNPMIMRQALLYSSMLNVPIAQHAEDLNLSAGGAINEGKISEALGVKGILSASESVMVSRDILLMKDIENVHYHILHISSKDSLDAVKRAKDLGLNVTCEVTPHHFTLTEDIVKQHGAIAKMNPPLRTEEDRLAMVEGLKTGVIDCIATDHAPHDRSSKDLPLESAAFGIVGLETMLPLSLELYHSGQIDLFDILAKLTYKPADIIHVPRGRVQKNFVADLTLVDLNYEWEIKIDSFASKSKNSPFGGRKVKGRVVRTIVSGKTVYSQK.

2 residues coordinate Zn(2+): H80 and H82. Substrate contacts are provided by residues 82 to 84 (HFR) and N114. The Zn(2+) site is built by D170, H197, and H251. N297 lines the substrate pocket. Residue D324 participates in Zn(2+) binding. D324 is a catalytic residue. Residues H328 and 342–343 (FG) contribute to the substrate site.

The protein belongs to the metallo-dependent hydrolases superfamily. DHOase family. Class I DHOase subfamily. The cofactor is Zn(2+).

It carries out the reaction (S)-dihydroorotate + H2O = N-carbamoyl-L-aspartate + H(+). It functions in the pathway pyrimidine metabolism; UMP biosynthesis via de novo pathway; (S)-dihydroorotate from bicarbonate: step 3/3. Catalyzes the reversible cyclization of carbamoyl aspartate to dihydroorotate. This Wolbachia sp. subsp. Brugia malayi (strain TRS) protein is Dihydroorotase.